The following is a 571-amino-acid chain: Sulfite reductase [NADPH] hemoprotein beta-component (571 aa).

[4Fe-4S] cluster contacts are provided by Cys435, Cys441, Cys480, and Cys484. Siroheme is bound at residue Cys484.

The protein belongs to the nitrite and sulfite reductase 4Fe-4S domain family. Alpha(8)-beta(8). The alpha component is a flavoprotein, the beta component is a hemoprotein. It depends on siroheme as a cofactor. The cofactor is [4Fe-4S] cluster.

It carries out the reaction hydrogen sulfide + 3 NADP(+) + 3 H2O = sulfite + 3 NADPH + 4 H(+). The protein operates within sulfur metabolism; hydrogen sulfide biosynthesis; hydrogen sulfide from sulfite (NADPH route): step 1/1. Its function is as follows. Component of the sulfite reductase complex that catalyzes the 6-electron reduction of sulfite to sulfide. This is one of several activities required for the biosynthesis of L-cysteine from sulfate. The chain is Sulfite reductase [NADPH] hemoprotein beta-component from Erwinia tasmaniensis (strain DSM 17950 / CFBP 7177 / CIP 109463 / NCPPB 4357 / Et1/99).